Here is a 128-residue protein sequence, read N- to C-terminus: Holo-[acyl-carrier-protein] synthase (128 aa).

Residues D9 and E60 each coordinate Mg(2+).

It belongs to the P-Pant transferase superfamily. AcpS family. Requires Mg(2+) as cofactor.

It is found in the cytoplasm. The enzyme catalyses apo-[ACP] + CoA = holo-[ACP] + adenosine 3',5'-bisphosphate + H(+). In terms of biological role, transfers the 4'-phosphopantetheine moiety from coenzyme A to a Ser of acyl-carrier-protein. The polypeptide is Holo-[acyl-carrier-protein] synthase (Buchnera aphidicola subsp. Baizongia pistaciae (strain Bp)).